A 762-amino-acid polypeptide reads, in one-letter code: Lysyl oxidase homolog 2B (762 aa).

A signal peptide spans 1 to 20 (MLALWSISFVLLCSWRLSYA). SRCR domains lie at 53–154 (LRLA…VVCS), 183–292 (IRPI…VSCI), 316–417 (VRLR…VKCN), and 427–536 (LRLS…VSCS). 9 disulfide bridges follow: Cys-79/Cys-143, Cys-92/Cys-153, Cys-123/Cys-133, Cys-213/Cys-281, Cys-226/Cys-291, Cys-260/Cys-270, Cys-341/Cys-406, Cys-354/Cys-416, and Cys-385/Cys-395. An N-linked (GlcNAc...) asparagine glycan is attached at Asn-278. A glycan (N-linked (GlcNAc...) asparagine) is linked at Asn-447. Intrachain disulfides connect Cys-456/Cys-522, Cys-469/Cys-535, and Cys-503/Cys-513. The lysyl-oxidase like stretch occupies residues 540-742 (PDLVLNPQVV…WMYNCHIGGS (203 aa)). Positions 541 and 542 each coordinate Ca(2+). 4 cysteine pairs are disulfide-bonded: Cys-565-Cys-616, Cys-571-Cys-686, Cys-648-Cys-664, and Cys-654-Cys-676. Cu cation is bound by residues His-617, His-619, and His-621. Asn-635 is a glycosylation site (N-linked (GlcNAc...) asparagine). Residues 644 to 680 (KASFCLEDSECDEGIEKRYECANFGEQGITVGCWDTY) constitute a cross-link (lysine tyrosylquinone (Lys-Tyr)). Residue Tyr-680 is modified to 2',4',5'-topaquinone. Ca(2+) is bound by residues Glu-713, Asp-715, Asn-718, and Asn-719. The cysteines at positions 723 and 737 are disulfide-linked.

Belongs to the lysyl oxidase family. Cu cation is required as a cofactor. The cofactor is lysine tyrosylquinone residue. In terms of processing, the lysine tyrosylquinone cross-link (LTQ) is generated by condensation of the epsilon-amino group of a lysine with a topaquinone produced by oxidation of tyrosine.

The protein resides in the secreted. It is found in the extracellular space. Its subcellular location is the extracellular matrix. The protein localises to the basement membrane. It localises to the nucleus. The protein resides in the chromosome. It is found in the endoplasmic reticulum. The enzyme catalyses L-lysyl-[protein] + O2 + H2O = (S)-2-amino-6-oxohexanoyl-[protein] + H2O2 + NH4(+). Functionally, mediates the post-translational oxidative deamination of lysine residues on target proteins leading to the formation of deaminated lysine (allysine). Acts as a transcription corepressor and specifically mediates deamination of trimethylated 'Lys-4' of histone H3 (H3K4me3), a specific tag for epigenetic transcriptional activation. Shows no activity against histone H3 when it is trimethylated on 'Lys-9' (H3K9me3) or 'Lys-27' (H3K27me3) or when 'Lys-4' is monomethylated (H3K4me1) or dimethylated (H3K4me2). Also mediates deamination of methylated TAF10, a member of the transcription factor IID (TFIID) complex, which induces release of TAF10 from promoters, leading to inhibition of TFIID-dependent transcription. LOXL2-mediated deamination of TAF10 results in transcriptional repression of genes required for embryonic stem cell pluripotency. Involved in epithelial to mesenchymal transition (EMT) and participates in repression of E-cadherin, probably by mediating deamination of histone H3. When secreted into the extracellular matrix, promotes cross-linking of extracellular matrix proteins by mediating oxidative deamination of peptidyl lysine residues in precursors to fibrous collagen and elastin. Acts as a regulator of sprouting angiogenesis, probably via collagen IV scaffolding. Acts as a regulator of chondrocyte differentiation, probably by regulating expression of factors that control chondrocyte differentiation. Required with loxl2a for correct expression of Sox2 and for neural differentiation. The protein is Lysyl oxidase homolog 2B (loxl2b) of Danio rerio (Zebrafish).